A 311-amino-acid chain; its full sequence is Pantothenate synthetase (311 aa).

An ATP-binding site is contributed by 43 to 50 (MGALHEGH). H50 acts as the Proton donor in catalysis. Q75 serves as a coordination point for (R)-pantoate. Q75 serves as a coordination point for beta-alanine. Residue 161–164 (GEKD) coordinates ATP. Residue Q167 participates in (R)-pantoate binding. ATP-binding positions include V190 and 198–201 (MSSR).

This sequence belongs to the pantothenate synthetase family. As to quaternary structure, homodimer.

It is found in the cytoplasm. It carries out the reaction (R)-pantoate + beta-alanine + ATP = (R)-pantothenate + AMP + diphosphate + H(+). The protein operates within cofactor biosynthesis; (R)-pantothenate biosynthesis; (R)-pantothenate from (R)-pantoate and beta-alanine: step 1/1. Its function is as follows. Catalyzes the condensation of pantoate with beta-alanine in an ATP-dependent reaction via a pantoyl-adenylate intermediate. In Mycolicibacterium vanbaalenii (strain DSM 7251 / JCM 13017 / BCRC 16820 / KCTC 9966 / NRRL B-24157 / PYR-1) (Mycobacterium vanbaalenii), this protein is Pantothenate synthetase.